A 235-amino-acid polypeptide reads, in one-letter code: Urease accessory protein UreF (235 aa).

Belongs to the UreF family. As to quaternary structure, ureD, UreF and UreG form a complex that acts as a GTP-hydrolysis-dependent molecular chaperone, activating the urease apoprotein by helping to assemble the nickel containing metallocenter of UreC. The UreE protein probably delivers the nickel.

It localises to the cytoplasm. Its function is as follows. Required for maturation of urease via the functional incorporation of the urease nickel metallocenter. In Haemophilus influenzae (strain PittEE), this protein is Urease accessory protein UreF.